We begin with the raw amino-acid sequence, 691 residues long: Calcium-binding and coiled-coil domain-containing protein 1 (691 aa).

The tract at residues 1–30 (MEESPLSRAPSRGGVNFLNVARTYIPNTKV) is p300 KIX-binding. The segment at 1 to 190 (MEESPLSRAP…VQELERALAT (190 aa)) is N-terminal AD (CTNNB1 binding site). Ser4 is modified (phosphoserine). The tract at residues 45–125 (SDWIGIFKVE…FQFREPRPMD (81 aa)) is interaction with GATA1. Coiled-coil stretches lie at residues 145 to 205 (KATV…YKGI), 232 to 339 (ELED…AELE), and 417 to 514 (QSVE…ADEK). Positions 501-691 (RKLEARLEKV…FSTQDPFTFE (191 aa)) are C-terminal AD (CTNNB1 binding site); interaction with CCAR1. Positions 513–604 (EKWNEDATTE…SDSEAEDEKS (92 aa)) are disordered. The UBZ1-type zinc-finger motif lies at 653-679 (WKECPICKERFPAESDKDALEDHMDGH). Positions 656, 659, 675, and 679 each coordinate Zn(2+).

This sequence belongs to the CALCOCO family. Part of a calphoglin complex consisting of CALCOCO1, PPA1 and PGM. Interacts with the bHLH-PAS domains of GRIP1, AHR and ARNT. Interacts with CTNNB1 via both its N- and C-terminal regions. Interacts with EP300. Interacts with CCAR1 (via N-terminus) and GATA1.

The protein localises to the cytoplasm. Its subcellular location is the nucleus. Its function is as follows. Functions as a coactivator for aryl hydrocarbon and nuclear receptors (NR). Recruited to promoters through its contact with the N-terminal basic helix-loop-helix-Per-Arnt-Sim (PAS) domain of transcription factors or coactivators, such as NCOA2. During ER-activation acts synergistically in combination with other NCOA2-binding proteins, such as EP300, CREBBP and CARM1. Involved in the transcriptional activation of target genes in the Wnt/CTNNB1 pathway. Functions as a secondary coactivator in LEF1-mediated transcriptional activation via its interaction with CTNNB1. Coactivator function for nuclear receptors and LEF1/CTNNB1 involves differential utilization of two different activation regions. In association with CCAR1 enhances GATA1- and MED1-mediated transcriptional activation from the gamma-globin promoter during erythroid differentiation of K562 erythroleukemia cells. Seems to enhance inorganic pyrophosphatase thus activating phosphogluomutase (PMG). Probably functions as a component of the calphoglin complex, which is involved in linking cellular metabolism (phosphate and glucose metabolism) with other core functions including protein synthesis and degradation, calcium signaling and cell growth. This Pongo abelii (Sumatran orangutan) protein is Calcium-binding and coiled-coil domain-containing protein 1 (CALCOCO1).